We begin with the raw amino-acid sequence, 56 residues long: U-megalopygitoxin(2)-Mo9 (56 aa).

The N-terminal stretch at Met1–Pro25 is a signal peptide. Residue Gln26 is modified to Pyrrolidone carboxylic acid. Thr55 bears the Threonine amide mark.

It belongs to the caterpillar 2 family. In terms of processing, contains 2 disulfide bonds. In terms of tissue distribution, expressed by the venom apparatus.

The protein resides in the secreted. Its function is as follows. Probable toxin. This Megalopyge opercularis (Southern flannel moth) protein is U-megalopygitoxin(2)-Mo9.